The chain runs to 369 residues: MNSELKPGLDLLGDPIVLTQRLVDIPSPSGQEKQIADEIEDALRNLNLPGVEVFRFNNNVLARTNRGLASRVMLAGHIDTVPIADNLPSRVEDGIMYGCGTVDMKSGLAVYLHTFATLATSTELKHDLTLIAYECEEVADHLNGLGHIRDEHPEWLAADLALLGEPTGGWIEAGCQGNLRIKVTAHGVRAHSARSWLGDNAMHKLSPIISKVAAYKAAEVNIDGLTYREGLNIVFCESGVANNVIPDLAWMNLNFRFAPNRDLNEAIEHVVETLELDGQDGIEWAVEDGAGGALPGLGQQVTSGLIDAVGREKIRAKFGWTDVSRFSAMGIPALNFGAGDPSFAHKRDEQCPVEQITDVAAILKQYLSE.

His-77 contacts Zn(2+). Asp-79 is a catalytic residue. Asp-103 serves as a coordination point for Zn(2+). Catalysis depends on Glu-136, which acts as the Proton acceptor. Positions 137, 165, and 345 each coordinate Zn(2+).

It belongs to the peptidase M20A family. Zn(2+) serves as cofactor. It depends on Co(2+) as a cofactor.

It carries out the reaction N-succinyl-(2S,6S)-2,6-diaminopimelate + H2O = (2S,6S)-2,6-diaminopimelate + succinate. Its pathway is amino-acid biosynthesis; L-lysine biosynthesis via DAP pathway; LL-2,6-diaminopimelate from (S)-tetrahydrodipicolinate (succinylase route): step 3/3. The protein is Succinyl-diaminopimelate desuccinylase (dapE) of Corynebacterium glutamicum (strain ATCC 13032 / DSM 20300 / JCM 1318 / BCRC 11384 / CCUG 27702 / LMG 3730 / NBRC 12168 / NCIMB 10025 / NRRL B-2784 / 534).